Reading from the N-terminus, the 263-residue chain is Putative TATA-binding protein pB263R (263 aa).

It belongs to the asfivirus B263R family.

In terms of biological role, putative TATA-binding protein. The chain is Putative TATA-binding protein pB263R from African swine fever virus (isolate Warthog/Namibia/Wart80/1980) (ASFV).